The following is a 629-amino-acid chain: UvrABC system protein C (629 aa).

Residues 26–105 form the GIY-YIG domain; it reads TSPGIYQFKN…IKELKPRYNV (80 aa). Residues 219–254 enclose the UVR domain; the sequence is SALIRSLTENMHLAATELRFEQAAEIKAQIESLKRY.

Belongs to the UvrC family. As to quaternary structure, interacts with UvrB in an incision complex.

The protein resides in the cytoplasm. In terms of biological role, the UvrABC repair system catalyzes the recognition and processing of DNA lesions. UvrC both incises the 5' and 3' sides of the lesion. The N-terminal half is responsible for the 3' incision and the C-terminal half is responsible for the 5' incision. The polypeptide is UvrABC system protein C (Chlorobium chlorochromatii (strain CaD3)).